The following is a 130-amino-acid chain: D-ribose pyranase (130 aa).

Residue His-20 is the Proton donor of the active site. Residues Asp-28, His-97, and 119-121 (YAN) each bind substrate.

This sequence belongs to the RbsD / FucU family. RbsD subfamily. In terms of assembly, homodecamer.

It is found in the cytoplasm. It carries out the reaction beta-D-ribopyranose = beta-D-ribofuranose. Its pathway is carbohydrate metabolism; D-ribose degradation; D-ribose 5-phosphate from beta-D-ribopyranose: step 1/2. In terms of biological role, catalyzes the interconversion of beta-pyran and beta-furan forms of D-ribose. This is D-ribose pyranase from Bacillus pumilus (strain SAFR-032).